A 2065-amino-acid chain; its full sequence is Cytoskeleton-associated protein 5-A (2065 aa).

TOG regions lie at residues 1–240 and 264–515; these read MGDD…DLKA and VDAY…KETK. 7 HEAT repeats span residues 120–157, 160–197, 270–311, 314–352, 356–393, 395–432, and 436–477; these read EKAE…EFGS, MTLK…WIRD, LEAV…NPKI, GDFA…GLRK, SYAG…TTTL, NISE…STLP, and LKPF…VNPF. The tract at residues 500–574 is disordered; the sequence is NGKKGGAAAG…GATAKGKKAV (75 aa). The segment covering 538-568 has biased composition (low complexity); the sequence is KAAAAPKKAPAAKPGGPVKKAKAPASSGATA. The TOG 3 stretch occupies residues 644–808; sequence KPGFKETNFQ…LSQIDAEFEK (165 aa). HEAT repeat units follow at residues 652–689 and 748–785; these read FQVM…KVGD and INVK…YMGA. The tract at residues 809–849 is disordered; the sequence is MKGQTPPVSIRGSKHGSGRDEGEEGEEQDEDAPADVTDLLP. Over residues 829–841 the composition is skewed to acidic residues; sequence EGEEGEEQDEDAP. Residues 846-1090 form a TOG 4 region; it reads DLLPRTDISD…AGPPGKASSK (245 aa). 4 HEAT repeats span residues 852–889, 892–929, 933–970, and 1015–1052; these read DISD…EAKF, PSIG…AMGH, QHVK…QTGM, and CVPY…KMSK. The span at 1074–1115 shows a compositional bias: low complexity; that stretch reads ASMPAKPAGPPGKASSKQPPAVAQASASPPPAASSDSGSSTS. The interval 1074 to 1192 is disordered; that stretch reads ASMPAKPAGP…AKDEEDKSGP (119 aa). The span at 1126-1163 shows a compositional bias: polar residues; that stretch reads PGTQASKAKTQSVSSEGNTSLNPSNTSLTPSKANTSLS. The tract at residues 1150–1235 is interaction with microtubule lattice; the sequence is NTSLTPSKAN…IEQLKTQMSP (86 aa). The TOG 5 stretch occupies residues 1191-1460; the sequence is GPIYIIVPNG…ERIKRAGKKQ (270 aa). HEAT repeat units lie at residues 1251–1288, 1295–1318, 1319–1355, 1357–1390, and 1395–1432; these read QRQI…RFFD, MKCL…LTEM, EGTS…VYPA, KMFN…SYGM, and PTPA…VHGE. 2 disordered regions span residues 1982 to 2001 and 2028 to 2065; these read DNAK…KSSA and VELD…SSRK. Residues 2002 to 2065 form an interaction with tacc3 region; that stretch reads PAVVSSTDML…RLERIKSSRK (64 aa). Residues 2038–2048 show a composition bias toward low complexity; the sequence is STTTSSSASST. The span at 2051-2065 shows a compositional bias: basic and acidic residues; it reads DDLKKRLERIKSSRK.

It belongs to the TOG/XMAP215 family. As to quaternary structure, interacts with tacc3; two molecules of ckap5 interact with 1 molecule of tacc3 probably mediated by coiled coil domains forming a four-helix bundle. Interacts with tacc3 and clathrin forming the TACC3/ch-TOG/clathrin complex located at spindle inter-microtubules bridges. Interacts with ndc80; indicative for an association with the NDC80 comnplex.

It is found in the cytoplasm. The protein resides in the cytoskeleton. The protein localises to the spindle pole. It localises to the spindle. Its subcellular location is the microtubule organizing center. It is found in the centrosome. The protein resides in the chromosome. The protein localises to the centromere. It localises to the kinetochore. Binds to the plus end of microtubules and regulates microtubule dynamics and microtubule organization. Acts as a processive microtubule polymerase. Promotes cytoplasmic microtubule nucleation and elongation. Plays a major role in organizing spindle poles. In spindle formation protects kinetochore microtubules from depolymerization by kif2c and has an essential role in centrosomal microtubule assembly independently of kif2c activity. Contributes to centrosome integrity. Acts as a component of the TACC3/ch-TOG/clathrin complex proposed to contribute to stabilization of kinetochore fibers of the mitotic spindle by acting as inter-microtubule bridge. Enhances the strength of NDC80 complex-mediated kinetochore-tip microtubule attachments. This chain is Cytoskeleton-associated protein 5-A (ckap5-a), found in Xenopus laevis (African clawed frog).